Here is an 857-residue protein sequence, read N- to C-terminus: Protein translocase subunit SecA (857 aa).

ATP-binding positions include Gln88, 106–110, and Asp496; that span reads GEGKT. The Zn(2+) site is built by Cys833, Cys835, Cys844, and Cys845.

The protein belongs to the SecA family. Monomer and homodimer. Part of the essential Sec protein translocation apparatus which comprises SecA, SecYEG and auxiliary proteins SecDF-YajC and YidC. Zn(2+) serves as cofactor.

It localises to the cell inner membrane. Its subcellular location is the cytoplasm. It catalyses the reaction ATP + H2O + cellular proteinSide 1 = ADP + phosphate + cellular proteinSide 2.. Functionally, part of the Sec protein translocase complex. Interacts with the SecYEG preprotein conducting channel. Has a central role in coupling the hydrolysis of ATP to the transfer of proteins into and across the cell membrane, serving as an ATP-driven molecular motor driving the stepwise translocation of polypeptide chains across the membrane. The chain is Protein translocase subunit SecA from Sulfurimonas denitrificans (strain ATCC 33889 / DSM 1251) (Thiomicrospira denitrificans (strain ATCC 33889 / DSM 1251)).